The primary structure comprises 90 residues: Putative protein p49 (90 aa).

The protein is Putative protein p49 (49) of Escherichia coli (Bacteriophage APSE-1).